The chain runs to 279 residues: Putative ABC transporter ATP-binding protein CA_C1368 (279 aa).

The ABC transporter domain occupies 4–239 (ISINNVDYIY…KKVLRNINLR (236 aa)). 37-44 (GPNGAGKS) contributes to the ATP binding site.

The protein belongs to the ABC transporter superfamily.

The protein localises to the cell membrane. In terms of biological role, probably part of an ABC transporter complex. Responsible for energy coupling to the transport system. The sequence is that of Putative ABC transporter ATP-binding protein CA_C1368 from Clostridium acetobutylicum (strain ATCC 824 / DSM 792 / JCM 1419 / IAM 19013 / LMG 5710 / NBRC 13948 / NRRL B-527 / VKM B-1787 / 2291 / W).